The sequence spans 201 residues: NADH-quinone oxidoreductase subunit C (201 aa).

It belongs to the complex I 30 kDa subunit family. In terms of assembly, NDH-1 is composed of 14 different subunits. Subunits NuoB, C, D, E, F, and G constitute the peripheral sector of the complex.

The protein resides in the cell inner membrane. It catalyses the reaction a quinone + NADH + 5 H(+)(in) = a quinol + NAD(+) + 4 H(+)(out). Functionally, NDH-1 shuttles electrons from NADH, via FMN and iron-sulfur (Fe-S) centers, to quinones in the respiratory chain. The immediate electron acceptor for the enzyme in this species is believed to be ubiquinone. Couples the redox reaction to proton translocation (for every two electrons transferred, four hydrogen ions are translocated across the cytoplasmic membrane), and thus conserves the redox energy in a proton gradient. This is NADH-quinone oxidoreductase subunit C from Mesorhizobium japonicum (strain LMG 29417 / CECT 9101 / MAFF 303099) (Mesorhizobium loti (strain MAFF 303099)).